The following is a 724-amino-acid chain: MNRNPRMSKFQPNPRSRSRFQDETDLRSLRSFKTDFSNYLASDTNFLNVAEIMTSYAYGESNNAHEKEIQCDLLTENGGIEIDPTRLSYRERIRWHLQQFCYKTSSHGIPMLGQAPNSLYRAAWVFLLLICAIQFINQAVAVIQKYQKMDKITDIQLKFDTAPFPAITLCNLNPYKDSVIRSHDSISKILGVFKSVMKKAGDSSSEALEEEEETEYDMNGITIQAKRKKRGAGEKGTFEPANSACECDEEDGSNECEERSTEKPSGDNDMCICAFDRQTNDAWPCHRKEQWTNTTCQTCDEHYLCSKKAKKGTKRSELKKEPCICESKGLFCIKHEHAAMVLNLWEYFGDSEDFSEISTEEREALGFGNMTDEVAIVTKAKENIIFAMSALSEEQRILMSQAKHNLIHKCSFNGKPCDIDQDFELVADPTFGNCFVFNHDREIFKSSVRAGPQYGLRVMLFVNASDYLPTSEAVGIRLTIHDKDDFPFPDTFGYSAPTGYISSFGMRMKKMSRLPAPYGDCVEDGATSNYIYKGYAYSTEGCYRTCFQELIIDRCGCSDPRFPSIGGVQPCQVFNKNHRECLEKHTHQIGEIHGSFKCRCQQPCNQTIYTTSYSEAIWPSQALNISLGQCEKEAEECNEEYKENAAMLEVFYEALNFEVLSESEAYGIVKMMADFGGHLGLWSGVSVMTCCEFVCLAFELIYMAIAHHINQQRIRRRENAANEY.

The span at 1-15 (MNRNPRMSKFQPNPR) shows a compositional bias: polar residues. Positions 1–22 (MNRNPRMSKFQPNPRSRSRFQD) are disordered. The Cytoplasmic segment spans residues 1-122 (MNRNPRMSKF…GQAPNSLYRA (122 aa)). Residues 123-143 (AWVFLLLICAIQFINQAVAVI) form a helical membrane-spanning segment. Residues 144 to 684 (QKYQKMDKIT…FGGHLGLWSG (541 aa)) are Extracellular-facing. The interval 229–265 (KRGAGEKGTFEPANSACECDEEDGSNECEERSTEKPS) is disordered. A compositionally biased stretch (acidic residues) spans 246 to 255 (ECDEEDGSNE). Residues 256 to 265 (CEERSTEKPS) are compositionally biased toward basic and acidic residues. N-linked (GlcNAc...) asparagine glycans are attached at residues Asn293, Asn369, Asn463, Asn605, and Asn624. Residues 685–705 (VSVMTCCEFVCLAFELIYMAI) form a helical membrane-spanning segment. Over 706–724 (AHHINQQRIRRRENAANEY) the chain is Cytoplasmic.

It belongs to the amiloride-sensitive sodium channel (TC 1.A.6) family. As to quaternary structure, component of a non-voltage-gated amiloride-sensitive cation channel complex (also called the degenerin channel complex) composed of at least the mec-2, mec-4, mec-6 and mec-10 subunits; the complex mediates mechanotransduction in touch cells. Interacts with mec-4 and mec-6.

It localises to the cell membrane. Functionally, subunit of an amiloride-sensitive cation channel (degenerin channel complex) permeable for sodium, potassium, lithium and N-methylglucamine, and required for mechanosensory transduction (touch sensitivity). Negatively regulates the turning step of male mating behavior. This is Degenerin mec-10 from Caenorhabditis elegans.